The chain runs to 471 residues: SVGFKAGVKEYKLTYYTPEYETKDTDILAAFRVTPQPGVPPEEAGAAVAAESSTGTWTTVWTDGLTSLDRYKGRCYGIEPVPGEENQYIAYVAYPLDLFEEGSVTNMFTSIVGNVFGFKALRALRLEDLRIPTAYIKTFQGPPHGIQVERDKLNKYGRPLLGCTIKPKLGLSAKNYGRAVYECLRGGLDFTKDDETVTSQPFMRWRDRFLFRAEAIYKAQAEPGEIKGHYLNATAGTCEEMMKRAVFARELGIPIVMHDYLTGGFTANTSLAHYCRDNGLLLHIHRAMHAVIDRQKNHGMHFRLLAKALRMSGGDHIHAGTVVGKLEGERDITLGFVDLLRDDFIENDRSRGIYFTQDWVSLPGVIPVASGGIHVWHMPALTEIFGDDSVLQFGGGTLGHPWGNAPGAVANRVALEACVQARNEGRDLAAEGNEIIREASKWSPELAAACEIWKEIRFNFAAMDTLDPLKS.

Lysine 5 bears the N6,N6,N6-trimethyllysine mark. Substrate contacts are provided by asparagine 114 and threonine 164. Lysine 166 acts as the Proton acceptor in catalysis. Lysine 168 lines the substrate pocket. The Mg(2+) site is built by lysine 192, aspartate 194, and glutamate 195. The residue at position 192 (lysine 192) is an N6-carboxylysine. Histidine 285 serves as the catalytic Proton acceptor. 3 residues coordinate substrate: arginine 286, histidine 318, and serine 370.

This sequence belongs to the RuBisCO large chain family. Type I subfamily. Heterohexadecamer of 8 large chains and 8 small chains; disulfide-linked. The disulfide link is formed within the large subunit homodimers. The cofactor is Mg(2+). The disulfide bond which can form in the large chain dimeric partners within the hexadecamer appears to be associated with oxidative stress and protein turnover.

It localises to the plastid. It is found in the chloroplast. It carries out the reaction 2 (2R)-3-phosphoglycerate + 2 H(+) = D-ribulose 1,5-bisphosphate + CO2 + H2O. The enzyme catalyses D-ribulose 1,5-bisphosphate + O2 = 2-phosphoglycolate + (2R)-3-phosphoglycerate + 2 H(+). In terms of biological role, ruBisCO catalyzes two reactions: the carboxylation of D-ribulose 1,5-bisphosphate, the primary event in carbon dioxide fixation, as well as the oxidative fragmentation of the pentose substrate in the photorespiration process. Both reactions occur simultaneously and in competition at the same active site. In Anthocleista grandiflora (Forest fever tree), this protein is Ribulose bisphosphate carboxylase large chain.